The following is a 916-amino-acid chain: uncharacterized protein (916 aa).

This is an uncharacterized protein from Micromonas pusilla reovirus (isolate Netherlands/2005) (MpRV).